The primary structure comprises 620 residues: Glutathione-regulated potassium-efflux system protein KefC (620 aa).

12 helical membrane passes run 4–24 (HTLL…PIAV), 26–46 (LGLG…PWGL), 54–74 (SILH…GLEL), 90–110 (GALQ…FLGL), 114–134 (VAEL…MQAM), 149–169 (FAVL…IPLL), 178–198 (LGAF…VVLL), 218–238 (VFSA…EEVG), 270–290 (GLLL…GTLV), 294–314 (LRIL…LWLV), 327–347 (WFAV…GAAQ), and 359–379 (ALTL…VLLT). One can recognise an RCK N-terminal domain in the interval 399 to 518 (QPRVIVAGFG…AGVAMPERET (120 aa)). Residues 599-620 (QGTAEGKHSGEVADEPEVKPSI) form a disordered region.

Belongs to the monovalent cation:proton antiporter 2 (CPA2) transporter (TC 2.A.37) family. KefC subfamily. As to quaternary structure, homodimer. Interacts with the regulatory subunit KefF.

It localises to the cell inner membrane. Its function is as follows. Pore-forming subunit of a potassium efflux system that confers protection against electrophiles. Catalyzes K(+)/H(+) antiport. The chain is Glutathione-regulated potassium-efflux system protein KefC from Salmonella agona (strain SL483).